A 1055-amino-acid polypeptide reads, in one-letter code: cAMP and cAMP-inhibited cGMP 3',5'-cyclic phosphodiesterase 10A (1055 aa).

Disordered stretches follow at residues Met1–Gly90, Ala151–Arg193, and Leu205–Gly250. Gly residues-rich tracts occupy residues Gly79–Gly90 and Ala154–Gln168. The span at Pro220 to Pro231 shows a compositional bias: low complexity. A compositionally biased stretch (gly residues) spans Gly232–Gln243. At Thr282 the chain carries Phosphothreonine. GAF domains follow at residues Asp367–Ile510 and Ala542–Leu688. Residues Arg562 to Cys563, Ile606 to Ala607, Thr640, Gln659, and His791 each bind 3',5'-cyclic AMP. A PDEase domain is found at Thr718–Glu1035. His791 (proton donor) is an active-site residue. A 3',5'-cyclic GMP-binding site is contributed by His791. A divalent metal cation-binding residues include His795, His829, Asp830, and Asp940. Position 992 (Gln992) interacts with 3',5'-cyclic AMP. Gln992 contacts 3',5'-cyclic GMP.

Belongs to the cyclic nucleotide phosphodiesterase family. As to quaternary structure, homodimer. A divalent metal cation is required as a cofactor. Post-translationally, phosphorylated on Thr-16. As to expression, abundant in the putamen and caudate nucleus regions of brain and testis, moderately expressed in the thyroid gland, pituitary gland, thalamus and cerebellum.

The protein resides in the cytoplasm. It is found in the cytosol. The enzyme catalyses a nucleoside 3',5'-cyclic phosphate + H2O = a nucleoside 5'-phosphate + H(+). The catalysed reaction is 3',5'-cyclic AMP + H2O = AMP + H(+). It carries out the reaction 3',5'-cyclic GMP + H2O = GMP + H(+). It participates in purine metabolism; 3',5'-cyclic AMP degradation; AMP from 3',5'-cyclic AMP: step 1/1. Its pathway is purine metabolism; 3',5'-cyclic GMP degradation; GMP from 3',5'-cyclic GMP: step 1/1. With respect to regulation, inhibited by dipyridamole and moderately by IBMX. cGMP acts as an allosteric activator. Plays a role in signal transduction by regulating the intracellular concentration of cyclic nucleotides. Can hydrolyze both cAMP and cGMP, but has higher affinity for cAMP and is more efficient with cAMP as substrate. May play a critical role in regulating cAMP and cGMP levels in the striatum, a region of the brain that contributes to the control of movement and cognition. This Homo sapiens (Human) protein is cAMP and cAMP-inhibited cGMP 3',5'-cyclic phosphodiesterase 10A (PDE10A).